Here is a 363-residue protein sequence, read N- to C-terminus: MKIGVFVPIGNNGWLISTTAPQYMPTFELNKAIVQKAEHYHFDFALSMIKLRGFGGKTEFWDHNLESFTLMAGLAAVTSRIQIYATAATLTLPPAIVARMASTIDSISGGRFGVNLVTGWQKPEYDQMGIWPGDEYFSRRYDYLTEYVQVLRDLWGTGKSDFKGDYFTMNDCRVSPQPSTPMKVICAGQSDAGMAFSAQHADFNFCFGKGVNTPAAFAPTAARMKDAAEKTGRDVGSYVLFMVIADETDEAARAKWEHYKAGADEDALSWLTEQSQKDTRSGADTNVRQMADPTSAVNINMGTLVGSYASVAKMLDEVASVPGAEGVLLTFDDFLQGVETFGERIQPLMECRSHIPAVTREVA.

Residues 49–50, Asn115, Glu124, 140–141, and Ser190 each bind FMN; these read IK and RY.

This sequence belongs to the NtaA/SnaA/DszA monooxygenase family. RutA subfamily.

The enzyme catalyses uracil + FMNH2 + NADH + O2 = (Z)-3-ureidoacrylate + FMN + NAD(+) + H2O + H(+). It carries out the reaction thymine + FMNH2 + NADH + O2 = (Z)-2-methylureidoacrylate + FMN + NAD(+) + H2O + H(+). In terms of biological role, catalyzes the pyrimidine ring opening between N-3 and C-4 by an unusual flavin hydroperoxide-catalyzed mechanism, adding oxygen atoms in the process to yield ureidoacrylate peracid, that immediately reacts with FMN forming ureidoacrylate and FMN-N(5)-oxide. The FMN-N(5)-oxide reacts spontaneously with NADH to produce FMN. Requires the flavin reductase RutF to regenerate FMN in vivo. In Enterobacter sp. (strain 638), this protein is Pyrimidine monooxygenase RutA.